The following is a 40-amino-acid chain: Large ribosomal subunit protein bL36A (40 aa).

This sequence belongs to the bacterial ribosomal protein bL36 family.

The polypeptide is Large ribosomal subunit protein bL36A (Kineococcus radiotolerans (strain ATCC BAA-149 / DSM 14245 / SRS30216)).